The primary structure comprises 256 residues: Histone H1 (256 aa).

Composition is skewed to low complexity over residues 1–19 and 27–43; these read MSDSAVATSASPVAAPPAT and KKASGSAGTKAKKASAT. Disordered regions lie at residues 1 to 53 and 108 to 256; these read MSDS…QQMV and GKGA…AAKK. At serine 11 the chain carries Phosphoserine. Residues 45–119 form the H15 domain; that stretch reads SHPPTQQMVD…GASGSFKLSA (75 aa). 2 stretches are compositionally biased toward basic and acidic residues: residues 121–140 and 176–193; these read AKKEKDPKAKSKVLSAEKKV and KTAENKKTEKAKAKDAKK. Positions 194 to 229 are enriched in low complexity; it reads TGIIKSKPAATKAKVTAAKPKAVVAKASKAKPAVSA. Basic residues predominate over residues 245–256; sequence KKPKAKTTAAKK.

The protein belongs to the histone H1/H5 family. Post-translationally, phosphorylated in oocytes during prophase I of meiosis.

The protein resides in the nucleus. The protein localises to the chromosome. Histones H1 are necessary for the condensation of nucleosome chains into higher-order structures. The sequence is that of Histone H1 (His1) from Drosophila melanogaster (Fruit fly).